We begin with the raw amino-acid sequence, 377 residues long: Homoserine O-succinyltransferase (377 aa).

Residues 45 to 356 (NAVLVCHALN…PHGHDAFLLD (312 aa)) form the AB hydrolase-1 domain. Ser151 (nucleophile) is an active-site residue. Arg221 provides a ligand contact to substrate. Residues Asp317 and His350 contribute to the active site. Asp351 serves as a coordination point for substrate.

This sequence belongs to the AB hydrolase superfamily. MetX family. Homodimer.

The protein localises to the cytoplasm. It carries out the reaction L-homoserine + succinyl-CoA = O-succinyl-L-homoserine + CoA. Its pathway is amino-acid biosynthesis; L-methionine biosynthesis via de novo pathway; O-succinyl-L-homoserine from L-homoserine: step 1/1. Functionally, transfers a succinyl group from succinyl-CoA to L-homoserine, forming succinyl-L-homoserine. In Leptothrix cholodnii (strain ATCC 51168 / LMG 8142 / SP-6) (Leptothrix discophora (strain SP-6)), this protein is Homoserine O-succinyltransferase.